We begin with the raw amino-acid sequence, 523 residues long: GMP synthase [glutamine-hydrolyzing] (523 aa).

One can recognise a Glutamine amidotransferase type-1 domain in the interval 9–198 (PVLVVDFGAQ…LTEIAGLEQN (190 aa)). Residue Cys86 is the Nucleophile of the active site. Catalysis depends on residues His172 and Glu174. The 199-residue stretch at 199–397 (WTAANIAEEL…LGLPEEIVGR (199 aa)) folds into the GMPS ATP-PPase domain. 227 to 233 (SGGVDSA) is an ATP binding site.

As to quaternary structure, homodimer.

It catalyses the reaction XMP + L-glutamine + ATP + H2O = GMP + L-glutamate + AMP + diphosphate + 2 H(+). Its pathway is purine metabolism; GMP biosynthesis; GMP from XMP (L-Gln route): step 1/1. Catalyzes the synthesis of GMP from XMP. In Corynebacterium glutamicum (strain ATCC 13032 / DSM 20300 / JCM 1318 / BCRC 11384 / CCUG 27702 / LMG 3730 / NBRC 12168 / NCIMB 10025 / NRRL B-2784 / 534), this protein is GMP synthase [glutamine-hydrolyzing].